Reading from the N-terminus, the 48-residue chain is uncharacterized protein (48 aa).

The tract at residues M1–G20 is disordered.

This is an uncharacterized protein from Bacillus subtilis (strain 168).